We begin with the raw amino-acid sequence, 553 residues long: Transcription factor GAMYB (553 aa).

Over residues 1–17 (MYRVKSESDCDMIHQEQ) the composition is skewed to basic and acidic residues. A disordered region spans residues 1–45 (MYRVKSESDCDMIHQEQMDSPVADDGSSGGSPHRGGGPPLKKGPW). Gly residues predominate over residues 27 to 38 (SSGGSPHRGGGP). 2 consecutive HTH myb-type domains span residues 37–89 (GPPL…ANHL) and 90–144 (RPNL…KRCQ). 2 consecutive DNA-binding regions (H-T-H motif) follow at residues 65-89 (WNAVQKNTGLFRCGKSCRLRWANHL) and 117-140 (WARMAAHLPGRTDNEIKNYWNTRI). The disordered stretch occupies residues 464 to 489 (PAQSTSMGSGEQVMGPKYEPGDTSPH).

Interacts with MYBS1. Expressed in aleurone cells, inflorescence shoot apical region, stamen primordia, and tapetum cells of the anther. Expressed at low level in roots and vegetative shoots.

It is found in the nucleus. In terms of biological role, transcriptional activator of gibberellin-dependent alpha-amylase expression in aleurone cells. Involved in pollen and floral organs development. May bind to the 5'-TAACAAA-3' box of alpha-amylase promoter. Required for anther development. Functions in parallel with UDT1 to regulate early anther development. Functions upstream of the transcription factor TDR and may positively regulate its transcription. Required for pollen development. Probably required for controlling tapetal cell size and promoting tapetal programmed cell death (PCD) during anther development. Required for exine and Ubisch body formation in anthers. Interacts with the DNA specific motifs of giberrellin-up-regulated genes of anthers and regulates their expression. Positively regulates the expression of the laurate hydroxylase CYP703A3, known to be essential for the development of pollen exine and anther epicuticular layer. Functions with MYBS1 to integrate diverse nutrient starvation and gibberellin (GA) signaling pathways during germination of grains. Sugar, nitrogen and phosphate starvation signals converge and interconnect with GA to promote the co-nuclear import of GAMYB and MYBS1, resulting in the expression of a large set of GA-inducible hydrolases, transporters and regulators that are essential for mobilization of nutrient reserves in the endosperm to support seedling growth. This chain is Transcription factor GAMYB, found in Oryza sativa subsp. japonica (Rice).